The sequence spans 208 residues: Redox-sensing transcriptional repressor Rex (208 aa).

The H-T-H motif DNA-binding region spans Ile-18–Ile-57. Gly-92–Gly-97 provides a ligand contact to NAD(+).

Belongs to the transcriptional regulatory Rex family. Homodimer.

The protein localises to the cytoplasm. Functionally, modulates transcription in response to changes in cellular NADH/NAD(+) redox state. In Latilactobacillus sakei subsp. sakei (strain 23K) (Lactobacillus sakei subsp. sakei), this protein is Redox-sensing transcriptional repressor Rex.